The following is a 354-amino-acid chain: Arginase (354 aa).

Residues His136, Asp159, His161, and Asp163 each coordinate Mn(2+). L-arginine contacts are provided by Asn165, Ser172, and Asp217. Asp266 and Asp268 together coordinate Mn(2+).

It belongs to the arginase family. As to quaternary structure, homotrimer; oligomerization is dependent on Mn(2+) binding. It depends on Mn(2+) as a cofactor.

The catalysed reaction is L-arginine + H2O = urea + L-ornithine. It functions in the pathway nitrogen metabolism; urea cycle; L-ornithine and urea from L-arginine: step 1/1. Its function is as follows. Catalyzes the hydrolysis of L-arginine into urea and L-ornithine, which is a precursor for polyamine biosynthesis. May play a role in parasite intra-hepatic development during the host liver stage. This Plasmodium berghei (strain Anka) protein is Arginase.